Consider the following 227-residue polypeptide: Myogenin (227 aa).

The bHLH domain maps to aspartate 82–leucine 133. A disordered region spans residues glutamine 147–alanine 196. The segment covering alanine 161 to glutamate 175 has biased composition (low complexity).

As to quaternary structure, homodimer and heterodimer. Efficient DNA binding requires dimerization with another bHLH protein.

It localises to the nucleus. Its function is as follows. Acts as a transcriptional activator that promotes transcription of muscle-specific target genes and plays a role in muscle differentiation. Induces fibroblasts to differentiate into myoblasts. Probable sequence specific DNA-binding protein. This Gallus gallus (Chicken) protein is Myogenin (MYOG).